Here is an 859-residue protein sequence, read N- to C-terminus: Envelope glycoprotein (859 aa).

Positions 1–6 (MVSIAF) are excised as a propeptide. Residues 7-614 (YGGIPGGIST…KDLWSHIGNW (608 aa)) lie on the Extracellular side of the membrane. N-linked (GlcNAc...) asparagine; by host glycans are attached at residues Asn-40, Asn-112, Asn-141, Asn-148, Asn-186, Asn-214, Asn-233, Asn-244, Asn-340, Asn-368, Asn-399, Asn-406, and Asn-411. The interval 446–466 (FGISAIVAAIVAATAIAASAT) is fusion peptide. N-linked (GlcNAc...) asparagine; by host glycans are attached at residues Asn-483 and Asn-490. Positions 498–513 (LIERQIKILYAMILQT) are immunosuppression. N-linked (GlcNAc...) asparagine; by host glycosylation is found at Asn-550 and Asn-557. Coiled-coil stretches lie at residues 576-624 (ILTT…SIIK) and 663-699 (KKFH…YYKQ). Residues 615-635 (IPGLGASIIKYIVMFLLIYLL) traverse the membrane as a helical segment. Residues 636-859 (LTSSPKILRA…TSHVSMPQYV (224 aa)) are Cytoplasmic-facing.

As to quaternary structure, the mature envelope protein (Env) consists of a trimer of SU-TM heterodimers attached by noncovalent interactions or by a labile interchain disulfide bond. Specific enzymatic cleavages in vivo yield mature proteins. Envelope glycoproteins are synthesized as an inactive precursor that is N-glycosylated and processed likely by host cell furin or by a furin-like protease in the Golgi to yield the mature SU and TM proteins. The cleavage site between SU and TM requires the minimal sequence [KR]-X-[KR]-R.

Its subcellular location is the virion membrane. The protein resides in the host cell membrane. Functionally, the surface protein (SU) attaches the virus to the host cell by binding to its receptor. This interaction triggers the refolding of the transmembrane protein (TM) and is thought to activate its fusogenic potential by unmasking its fusion peptide. Fusion occurs at the host cell plasma membrane. The transmembrane protein (TM) acts as a class I viral fusion protein. Under the current model, the protein has at least 3 conformational states: pre-fusion native state, pre-hairpin intermediate state, and post-fusion hairpin state. During viral and target cell membrane fusion, the coiled coil regions (heptad repeats) assume a trimer-of-hairpins structure, positioning the fusion peptide in close proximity to the C-terminal region of the ectodomain. The formation of this structure appears to drive apposition and subsequent fusion of viral and target cell membranes. Membranes fusion leads to delivery of the nucleocapsid into the cytoplasm. The polypeptide is Envelope glycoprotein (env) (Equine infectious anemia virus (isolate 1369) (EIAV)).